The chain runs to 516 residues: GMP synthase [glutamine-hydrolyzing] (516 aa).

The 192-residue stretch at 10-201 folds into the Glutamine amidotransferase type-1 domain; the sequence is KIIVLDFGSQ…AFDVCGAVAN (192 aa). The active-site Nucleophile is Cys-87. Active-site residues include His-175 and Glu-177. The GMPS ATP-PPase domain occupies 202-391; the sequence is WTMADFIDMQ…LGIPHDLVWR (190 aa). 229–235 serves as a coordination point for ATP; sequence SGGVDSS.

Homodimer.

The catalysed reaction is XMP + L-glutamine + ATP + H2O = GMP + L-glutamate + AMP + diphosphate + 2 H(+). Its pathway is purine metabolism; GMP biosynthesis; GMP from XMP (L-Gln route): step 1/1. Functionally, catalyzes the synthesis of GMP from XMP. This is GMP synthase [glutamine-hydrolyzing] from Lactobacillus acidophilus (strain ATCC 700396 / NCK56 / N2 / NCFM).